We begin with the raw amino-acid sequence, 891 residues long: Protein SEY1 homolog (891 aa).

At 1 to 754 (MNLHLVDSDG…LRAAEAGNQR (754 aa)) the chain is on the cytoplasmic side. The 267-residue stretch at 52 to 318 (GLNYHVVGVF…RCSDYLFSYH (267 aa)) folds into the GB1/RHD3-type G domain. 62–69 (GGQSSGKS) serves as a coordination point for GTP. The helical transmembrane segment at 755-775 (LPAWVIPALFILGWNELLYVL) threads the bilayer. At 776–778 (TSP) the chain is on the lumenal side. The helical transmembrane segment at 779–799 (ALLVLVVVICAVFFRQFFVSQ) threads the bilayer. Topologically, residues 800–891 (WHAFEETGPA…MRHRTTHKLD (92 aa)) are cytoplasmic. Positions 863–880 (STHADPAPSNTTVPTAQA) are enriched in polar residues. Residues 863 to 891 (STHADPAPSNTTVPTAQATMRHRTTHKLD) are disordered. The segment covering 882 to 891 (MRHRTTHKLD) has biased composition (basic residues).

It belongs to the TRAFAC class dynamin-like GTPase superfamily. GB1/RHD3 GTPase family. RHD3 subfamily.

The protein localises to the endoplasmic reticulum membrane. In terms of biological role, probable GTP-binding protein that may be involved in cell development. This Leishmania braziliensis protein is Protein SEY1 homolog.